A 311-amino-acid chain; its full sequence is Methionyl-tRNA formyltransferase (311 aa).

Residue 109–112 coordinates (6S)-5,6,7,8-tetrahydrofolate; that stretch reads SLLP.

Belongs to the Fmt family.

It carries out the reaction L-methionyl-tRNA(fMet) + (6R)-10-formyltetrahydrofolate = N-formyl-L-methionyl-tRNA(fMet) + (6S)-5,6,7,8-tetrahydrofolate + H(+). Functionally, attaches a formyl group to the free amino group of methionyl-tRNA(fMet). The formyl group appears to play a dual role in the initiator identity of N-formylmethionyl-tRNA by promoting its recognition by IF2 and preventing the misappropriation of this tRNA by the elongation apparatus. This Staphylococcus aureus (strain USA300) protein is Methionyl-tRNA formyltransferase.